The chain runs to 686 residues: LEAF RUST 10 DISEASE-RESISTANCE LOCUS RECEPTOR-LIKE PROTEIN KINASE-like 1.3 (686 aa).

The signal sequence occupies residues 1-33 (MFSPVLFRFSKPNSFLVLLFFLSYIHFLPCAQS). Over 34–264 (QREPCDTLFR…AGLSKKGKIG (231 aa)) the chain is Extracellular. Asparagine 76, asparagine 93, asparagine 175, asparagine 190, and asparagine 236 each carry an N-linked (GlcNAc...) asparagine glycan. The chain crosses the membrane as a helical span at residues 265–285 (IGFASGFLGATLIGGCLLCIF). Residues 286–686 (IRRRKKLATQ…SSSNTTASSF (401 aa)) are Cytoplasmic-facing. One can recognise a Protein kinase domain in the interval 358 to 633 (ENFSKELGDG…DEIVEVLRVI (276 aa)). ATP-binding positions include 364-372 (LGDGGFGTV) and lysine 386. Tyrosine 432 carries the phosphotyrosine modification. Aspartate 482 (proton acceptor) is an active-site residue. Serine 515 carries the post-translational modification Phosphoserine. Residues threonine 516 and threonine 521 each carry the phosphothreonine modification. The residue at position 529 (tyrosine 529) is a Phosphotyrosine. The disordered stretch occupies residues 657 to 686 (GLLKHGVPPPLSPETDKTTASSSNTTASSF). Low complexity predominate over residues 674–686 (TTASSSNTTASSF).

It belongs to the protein kinase superfamily. Ser/Thr protein kinase family.

Its subcellular location is the cell membrane. The catalysed reaction is L-seryl-[protein] + ATP = O-phospho-L-seryl-[protein] + ADP + H(+). It catalyses the reaction L-threonyl-[protein] + ATP = O-phospho-L-threonyl-[protein] + ADP + H(+). The polypeptide is LEAF RUST 10 DISEASE-RESISTANCE LOCUS RECEPTOR-LIKE PROTEIN KINASE-like 1.3 (Arabidopsis thaliana (Mouse-ear cress)).